The chain runs to 397 residues: MSAQVILQPSRDKSLRRKHPWVFESAVAELKGRARIGDTVDVFDDEGDWLGRGAYSPHSKIRVRMWTFKKDESIDNGFFLRRLETALALRKRLFDPNKTNAFRWIASESDGLPGVTIDLYDNVAVVQLLSAGGEKHRDKIVWAITKLMPDVHVYERSDVDVRKKEGLEPVTGVLHGQPPTQVTVKENGINIVVDIESGHKTGFYLDQRDSRAAAAHYAKDADVLNCFSYTGTFSCYALSGGAKSVTNVDVSQPALDLAKHHVAINGFDDKRTQYLNKDVFKALREYHEQNKQFDMVILDPPKFVDNKASLNRAARGYKDINMYGIHAVKSGGLLLTFSCSGLMPADLFQKVVADAALDAGRTIKIIARLNQASDHPIIGSYPEGYYLKGLVCEVTDD.

A PUA domain is found at 2 to 81; it reads SAQVILQPSR…ESIDNGFFLR (80 aa).

Belongs to the methyltransferase superfamily. RlmI family.

The protein resides in the cytoplasm. The catalysed reaction is cytidine(1962) in 23S rRNA + S-adenosyl-L-methionine = 5-methylcytidine(1962) in 23S rRNA + S-adenosyl-L-homocysteine + H(+). Specifically methylates the cytosine at position 1962 (m5C1962) of 23S rRNA. This is Ribosomal RNA large subunit methyltransferase I from Alteromonas mediterranea (strain DSM 17117 / CIP 110805 / LMG 28347 / Deep ecotype).